The following is an 825-amino-acid chain: Glycerol-3-phosphate acyltransferase (825 aa).

The HXXXXD motif motif lies at 304-309 (CHRSHM). The disordered stretch occupies residues 803–825 (MPAETSNQPEAPETPEPEGKTES).

The protein belongs to the GPAT/DAPAT family.

The protein resides in the cell inner membrane. It catalyses the reaction sn-glycerol 3-phosphate + an acyl-CoA = a 1-acyl-sn-glycero-3-phosphate + CoA. It participates in phospholipid metabolism; CDP-diacylglycerol biosynthesis; CDP-diacylglycerol from sn-glycerol 3-phosphate: step 1/3. This chain is Glycerol-3-phosphate acyltransferase, found in Yersinia pseudotuberculosis serotype O:1b (strain IP 31758).